The following is a 141-amino-acid chain: HTH-type transcriptional repressor NsrR (141 aa).

An HTH rrf2-type domain is found at 2–129 (QLTSFTDYGL…DNYTLADLVE (128 aa)). The segment at residues 28-51 (ISEVTDVYGVSRNHMVKIINQLSR) is a DNA-binding region (H-T-H motif). 3 residues coordinate [2Fe-2S] cluster: Cys-91, Cys-96, and Cys-102.

[2Fe-2S] cluster serves as cofactor.

Functionally, nitric oxide-sensitive repressor of genes involved in protecting the cell against nitrosative stress. May require iron for activity. The polypeptide is HTH-type transcriptional repressor NsrR (Escherichia coli O139:H28 (strain E24377A / ETEC)).